The primary structure comprises 318 residues: Transaldolase (318 aa).

The Schiff-base intermediate with substrate role is filled by K131.

The protein belongs to the transaldolase family. Type 1 subfamily. Homodimer.

The protein resides in the cytoplasm. It carries out the reaction D-sedoheptulose 7-phosphate + D-glyceraldehyde 3-phosphate = D-erythrose 4-phosphate + beta-D-fructose 6-phosphate. It functions in the pathway carbohydrate degradation; pentose phosphate pathway; D-glyceraldehyde 3-phosphate and beta-D-fructose 6-phosphate from D-ribose 5-phosphate and D-xylulose 5-phosphate (non-oxidative stage): step 2/3. Its function is as follows. Transaldolase is important for the balance of metabolites in the pentose-phosphate pathway. This chain is Transaldolase, found in Buchnera aphidicola subsp. Cinara cedri (strain Cc).